Consider the following 538-residue polypeptide: Cytochrome P450 monooxygenase xanG (538 aa).

Residues 44–64 (MILYYLASIPLAIICYLAWYL) form a helical membrane-spanning segment. Asn-378 carries N-linked (GlcNAc...) asparagine glycosylation. Cys-489 is a binding site for heme.

Belongs to the cytochrome P450 family. Heme serves as cofactor.

It localises to the membrane. The protein operates within secondary metabolite biosynthesis. In terms of biological role, cytochrome P450 monooxygenase; part of the gene cluster that mediates the biosynthesis of the isocyanide xanthocillin and its derivatives. The first step of the pathway consists in the conversion of tyrosine into a vinyl-isonitrile intermediate by the isocyanide synthase xanB. Subsequent oxidative dimerization of this intermediate to form xanthocillin may involve the cytochrome P450 monooxygenase xanG, whose expression is coregulated with that of XanB. Xanthocillin can be further modified by the isonitrile hydratase-like protein xanA which introduces N-formyl groups and the methyltransferase xanE which introduces methyl groups, leading to the production of several derivatives including fumiformamide. Finally, fumiformamide can be subject to both oxidative and reductive cyclization to yield melanocins E and F, respectively. This is Cytochrome P450 monooxygenase xanG from Aspergillus fumigatus (strain ATCC MYA-4609 / CBS 101355 / FGSC A1100 / Af293) (Neosartorya fumigata).